Consider the following 499-residue polypeptide: Proline dehydrogenase 1, mitochondrial (499 aa).

The transit peptide at 1–72 (MATRLLRTNF…LDLSDQARLF (72 aa)) directs the protein to the mitochondrion.

The protein belongs to the proline oxidase family. FAD is required as a cofactor. As to expression, ubiquitous. Highest expression in pollen grains, in the stigma and in developing embryos.

It localises to the mitochondrion. It carries out the reaction L-proline + a quinone = (S)-1-pyrroline-5-carboxylate + a quinol + H(+). It functions in the pathway amino-acid degradation; L-proline degradation into L-glutamate; L-glutamate from L-proline: step 1/2. Converts proline to delta-1-pyrroline-5-carboxylate. The protein is Proline dehydrogenase 1, mitochondrial (POX1) of Arabidopsis thaliana (Mouse-ear cress).